The chain runs to 502 residues: Cytochrome P450 CYP94D109 (502 aa).

Residues 3–23 form a helical membrane-spanning segment; sequence SLSLIFISFITLIVFLVVSAS. A heme-binding site is contributed by cysteine 437.

Belongs to the cytochrome P450 family. In terms of tissue distribution, mainly expressed in leaves and, at low levels, in roots, fruits and stems.

Its subcellular location is the membrane. It functions in the pathway steroid metabolism; cholesterol metabolism. Involved in the biosynthesis of spiroketal steroid and saponin natural products from cholesterol such as diosgenin and analogs (e.g. furostanol and spirostanol), plant defense compounds used as main precursors for the industrial production of steroid hormones. During the 5,6-spiroketalization of cholesterol, may catalyze the 27-monohydroxylation of furostanol-type steroid to an intermediate product that undergoes a stereospecific formation of the terminal heterocycle to yield diosgenin. This chain is Cytochrome P450 CYP94D109, found in Paris polyphylla (Daiswa polyphylla).